The chain runs to 475 residues: Integrator complex subunit 15 (475 aa).

The tract at residues 402-444 (YPHIHPGRPSPLSPHSPHQSTLSSPHSPHTVLTAHPTHPALAP) is disordered. Over residues 416–430 (HSPHQSTLSSPHSPH) the composition is skewed to low complexity.

This sequence belongs to the Integrator subunit 15 family. As to quaternary structure, component of the Integrator complex, composed of core subunits INTS1, INTS2, INTS3, INTS4, INTS5, INTS6, INTS7, INTS8, INTS9/RC74, INTS10, INTS11/CPSF3L, INTS12, INTS13, INTS14 and INTS15. The core complex associates with protein phosphatase 2A subunits PPP2CA and PPP2R1A, to form the Integrator-PP2A (INTAC) complex. INTS15 is part of the tail subcomplex, composed of INTS10, INTS13, INTS14 and INTS15.

It localises to the nucleus. It is found in the chromosome. In terms of biological role, component of the integrator complex, a multiprotein complex that terminates RNA polymerase II (Pol II) transcription in the promoter-proximal region of genes. The integrator complex provides a quality checkpoint during transcription elongation by driving premature transcription termination of transcripts that are unfavorably configured for transcriptional elongation: the complex terminates transcription by (1) catalyzing dephosphorylation of the C-terminal domain (CTD) of Pol II subunit POLR2A/RPB1 and SUPT5H/SPT5, (2) degrading the exiting nascent RNA transcript via endonuclease activity and (3) promoting the release of Pol II from bound DNA. The integrator complex is also involved in terminating the synthesis of non-coding Pol II transcripts, such as enhancer RNAs (eRNAs), small nuclear RNAs (snRNAs), telomerase RNAs and long non-coding RNAs (lncRNAs). INTS15 is part of the integrator tail module that acts as a platform for the recruitment of transcription factors at promoters. Within the integrator complex, INTS15 is required to bridge different integrator modules. The sequence is that of Integrator complex subunit 15 (ints15) from Danio rerio (Zebrafish).